The primary structure comprises 98 residues: Large ribosomal subunit protein uL23 (98 aa).

Belongs to the universal ribosomal protein uL23 family. Part of the 50S ribosomal subunit. Contacts protein L29, and trigger factor when it is bound to the ribosome.

In terms of biological role, one of the early assembly proteins it binds 23S rRNA. One of the proteins that surrounds the polypeptide exit tunnel on the outside of the ribosome. Forms the main docking site for trigger factor binding to the ribosome. In Dinoroseobacter shibae (strain DSM 16493 / NCIMB 14021 / DFL 12), this protein is Large ribosomal subunit protein uL23.